The primary structure comprises 249 residues: Suppressor of silencing P0 (249 aa).

The F-box-like domain maps to 63 to 67 (LPFHL).

Belongs to the polerovirus P0 protein family. As to quaternary structure, interacts (via F-box-like domain) with host AGO1; this interaction targets AGO1 for degradation, and thereby suppresses the silencing function of the latter. Interacts (via F-box-like domain) with host ASK1 and ASK2 (SKP proteins); these interactions are essential for viral pathogenicity. Part of a SCF P0 complex composed of P0 and the host proteins SKP and CUL1.

Its function is as follows. Suppressor of RNA-mediated gene silencing, also known as post-transcriptional gene silencing (PTGS), a mechanism of plant viral defense that limits the accumulation of viral RNAs. The P0 protein suppresses local PTGS using its F-box-like domain to mediate destabilization and degradation of the AGO1 protein. The chain is Suppressor of silencing P0 from Turnip yellows virus (isolate FL-1) (TuYV).